Here is a 1094-residue protein sequence, read N- to C-terminus: Transport and Golgi organization protein 6 homolog (1094 aa).

The helical transmembrane segment at 468 to 488 (LTVLMDSLLPVLGVLFLLYCF) threads the bilayer. Ser-556 carries the post-translational modification Phosphoserine. Residues 777 to 795 (EEQQQTSHERPTDVAHSHL) are compositionally biased toward basic and acidic residues. A disordered region spans residues 777–834 (EEQQQTSHERPTDVAHSHLEQQQSHETAPQTGLQSNAPIIPQGVNEPSTTTSQKSGSV). Composition is skewed to polar residues over residues 796 to 813 (EQQQ…QSNA) and 821 to 834 (NEPS…SGSV). 2 HEAT repeats span residues 873-909 (LEMQ…SDVY) and 952-988 (SKYR…CQRL).

Belongs to the Tango6 family.

It localises to the membrane. The polypeptide is Transport and Golgi organization protein 6 homolog (TANGO6) (Homo sapiens (Human)).